Here is a 308-residue protein sequence, read N- to C-terminus: ATP synthase gamma chain (308 aa).

This sequence belongs to the ATPase gamma chain family. As to quaternary structure, F-type ATPases have 2 components, CF(1) - the catalytic core - and CF(0) - the membrane proton channel. CF(1) has five subunits: alpha(3), beta(3), gamma(1), delta(1), epsilon(1). CF(0) has three main subunits: a, b and c.

The protein resides in the cell membrane. In terms of biological role, produces ATP from ADP in the presence of a proton gradient across the membrane. The gamma chain is believed to be important in regulating ATPase activity and the flow of protons through the CF(0) complex. The sequence is that of ATP synthase gamma chain from Saccharopolyspora erythraea (strain ATCC 11635 / DSM 40517 / JCM 4748 / NBRC 13426 / NCIMB 8594 / NRRL 2338).